A 250-amino-acid chain; its full sequence is tRNA (guanine-N(1)-)-methyltransferase (250 aa).

S-adenosyl-L-methionine is bound by residues G115 and 135–140; that span reads LGDFVL.

It belongs to the RNA methyltransferase TrmD family. Homodimer.

The protein localises to the cytoplasm. The enzyme catalyses guanosine(37) in tRNA + S-adenosyl-L-methionine = N(1)-methylguanosine(37) in tRNA + S-adenosyl-L-homocysteine + H(+). Functionally, specifically methylates guanosine-37 in various tRNAs. The chain is tRNA (guanine-N(1)-)-methyltransferase from Legionella pneumophila (strain Paris).